The primary structure comprises 378 residues: Lipid-A-disaccharide synthase (378 aa).

It belongs to the LpxB family.

The enzyme catalyses a lipid X + a UDP-2-N,3-O-bis[(3R)-3-hydroxyacyl]-alpha-D-glucosamine = a lipid A disaccharide + UDP + H(+). It functions in the pathway bacterial outer membrane biogenesis; LPS lipid A biosynthesis. In terms of biological role, condensation of UDP-2,3-diacylglucosamine and 2,3-diacylglucosamine-1-phosphate to form lipid A disaccharide, a precursor of lipid A, a phosphorylated glycolipid that anchors the lipopolysaccharide to the outer membrane of the cell. The chain is Lipid-A-disaccharide synthase from Pseudomonas paraeruginosa (strain DSM 24068 / PA7) (Pseudomonas aeruginosa (strain PA7)).